The sequence spans 423 residues: D-tagatose-1,6-bisphosphate aldolase subunit GatZ (423 aa).

This sequence belongs to the GatZ/KbaZ family. GatZ subfamily. Forms a complex with GatY.

Its pathway is carbohydrate metabolism; D-tagatose 6-phosphate degradation; D-glyceraldehyde 3-phosphate and glycerone phosphate from D-tagatose 6-phosphate: step 2/2. Its function is as follows. Component of the tagatose-1,6-bisphosphate aldolase GatYZ that is required for full activity and stability of the Y subunit. Could have a chaperone-like function for the proper and stable folding of GatY. When expressed alone, GatZ does not show any aldolase activity. Is involved in the catabolism of galactitol. This Salmonella gallinarum (strain 287/91 / NCTC 13346) protein is D-tagatose-1,6-bisphosphate aldolase subunit GatZ.